We begin with the raw amino-acid sequence, 54 residues long: Chymosin (54 aa).

A propeptide spans 1–27 (SEITRVPLHKGKSLRKALKEHGLLEBF) (activation peptide).

This sequence belongs to the peptidase A1 family. In terms of assembly, monomer.

The enzyme catalyses Broad specificity similar to that of pepsin A. Clots milk by cleavage of a single 104-Ser-Phe-|-Met-Ala-107 bond in kappa-chain of casein.. Functionally, chymosin is synthesized in the mucosa of the stomach. The enzyme hydrolyzes casein to paracasein. The polypeptide is Chymosin (CYM) (Felis catus (Cat)).